Consider the following 630-residue polypeptide: MDLTQIQNPSFLKDMSISELEGLSEDIRKFLIEELSQTGGHIAPNLGVVELTIALHKLFDSPKDKFLWDVGHQSYVHKILTGRAKEFGTLRQYQGLCGFPKRCESEHDVWETGHSSTSLSAAMGMALARDLKKTEEYVIPIIGDGALTGGMALEALNHIGHEKTDMIVILNDNEMSIAPNVGALHNVLGRLRTAGKYHWVKDELEYILKKIPAVGGKVAATAEKIKDSLKYLLVSGVFFEELGFTYLGPVDGHDYEKLFETLQYAKKTKGPVLVHVITKKGKGYKPAESDVIGTWHGTGSYKIESGDFVKPKEVAPAWSAVVSETVLKLARTDERIVAITPAMPVGSKLEKFQKEFPDRMIDVGIAEQHATTMAAGMATQGMKPFLAIYSTFLQRAYDQVVHDICRQNLNVFIGIDRSGLVGADGETHQGVFDIAFLRHLPNMVLMMPKDENEGQHLVYTAMQYEDGPIALRYARGNGLGVQMDEELKAIPIGTWETLKEGTQAAILTFGTTIPMAMEAAERLEQAGVSVKVVNARFIKPMDEAYLHELLGKNIPILTIEEACLIGGFGTGVVEFASENGYHSALIERMGIPDRFIEHGSVTKLLEEIGLTTDAVVDRIHTMIPSKQKRA.

Thiamine diphosphate contacts are provided by residues histidine 72 and 113-115 (GHS). Aspartate 144 contacts Mg(2+). Thiamine diphosphate-binding positions include 145–146 (GA), asparagine 173, tyrosine 284, and glutamate 367. Asparagine 173 is a Mg(2+) binding site.

This sequence belongs to the transketolase family. DXPS subfamily. As to quaternary structure, homodimer. Mg(2+) is required as a cofactor. It depends on thiamine diphosphate as a cofactor.

The catalysed reaction is D-glyceraldehyde 3-phosphate + pyruvate + H(+) = 1-deoxy-D-xylulose 5-phosphate + CO2. Its pathway is metabolic intermediate biosynthesis; 1-deoxy-D-xylulose 5-phosphate biosynthesis; 1-deoxy-D-xylulose 5-phosphate from D-glyceraldehyde 3-phosphate and pyruvate: step 1/1. Its function is as follows. Catalyzes the acyloin condensation reaction between C atoms 2 and 3 of pyruvate and glyceraldehyde 3-phosphate to yield 1-deoxy-D-xylulose-5-phosphate (DXP). The polypeptide is 1-deoxy-D-xylulose-5-phosphate synthase (Bacillus mycoides (strain KBAB4) (Bacillus weihenstephanensis)).